The chain runs to 191 residues: MPSELTPEERSELKNSIAEFHTYQLDPGSCSSLHAQRIHAPPELVWSIVRRFDKPQTYKHFIKSCSVEQNFEMRVGCTRDVIVISGLPANTSTERLDILDDERRVTGFSIIGGEHRLTNYKSVTTVHRFEKENRIWTVVLESYVVDMPEGNSEDDTRMFADTVVKLNLQKLATVAEAMARNSGDGSGSQVT.

The segment at 23–176 is START-like; sequence YQLDPGSCSS…NLQKLATVAE (154 aa). Position 59 (Lys-59) interacts with abscisate. Position 78 is a phosphothreonine; by CARK1 (Thr-78). The Gate loop motif lies at 85-89; that stretch reads SGLPA. Residues 89 to 94, 116 to 122, and Glu-141 contribute to the abscisate site; these read ANTSTE and RLTNYKS. The Latch loop signature appears at 115–117; that stretch reads HRL.

Belongs to the PYR/PYL/RCAR abscisic acid intracellular receptor family. Homodimer. Binds ABA on one subunit only. Interacts with HAB1, AHG3, ABI1 and ABI2 when complexed to ABA, and possibly with other PP2Cs. Binds to CARs protein in an ABA-independent manner, both at the plasma membrane and in the nucleus. Interacts directly with CAR1 and CAR4. Interacts with CARK1 in the cytosol. Interacts with AIP1 in an abscisic acid-dependent manner. Interacts with FREE1 (via N-terminus). Interacts with the E3 ubiquitin-protein ligase RSL1 at the plasma membrane. In terms of processing, ubiquitynated and degraded by the proteasome upon binding to the E3 ubiquitin-protein ligase RSL1 at the plasma membrane. Post-translationally, phosphorylated by CARK1 especially in response to abscisic acid (ABA); this phosphorylation promotes its stability and inhibitory ability to ABI1.

The protein localises to the cytoplasm. Its subcellular location is the cytosol. It localises to the nucleus. It is found in the cell membrane. The protein resides in the vacuole. In terms of biological role, receptor for abscisic acid (ABA) required for ABA-mediated responses such as stomatal closure and germination inhibition. Inhibits the activity of group-A protein phosphatases type 2C (PP2Cs) when activated by ABA. Can be activated by both (-)-ABA and (+)-ABA. Promotes drought tolerance. The polypeptide is Abscisic acid receptor PYR1 (Arabidopsis thaliana (Mouse-ear cress)).